The primary structure comprises 390 residues: Leucine aminopeptidase 1 (390 aa).

The signal sequence occupies residues Met-1–Ser-18. Positions Tyr-19–Val-90 are excised as a propeptide. Residue Asn-120 is glycosylated (N-linked (GlcNAc...) asparagine). Residues His-190, Asp-209, Glu-248, and Asp-275 each coordinate Zn(2+). Cys-324 and Cys-328 form a disulfide bridge. Residue His-357 participates in Zn(2+) binding.

Belongs to the peptidase M28 family. M28E subfamily. As to quaternary structure, monomer. It depends on Zn(2+) as a cofactor.

The protein localises to the secreted. In terms of biological role, extracellular aminopeptidase that allows assimilation of proteinaceous substrates. This Emericella nidulans (strain FGSC A4 / ATCC 38163 / CBS 112.46 / NRRL 194 / M139) (Aspergillus nidulans) protein is Leucine aminopeptidase 1 (lap1).